Consider the following 114-residue polypeptide: MAEITSAKAMARTVRVSPRKTRLVLDLIRGKNVADAIAILKFTPNKAARIVEKTLNSAVANAENNFGLEKANLVVSETFANEGPTMKRFRPRAKGSASPINKRTTHVTVVVEEK.

Belongs to the universal ribosomal protein uL22 family. As to quaternary structure, part of the 50S ribosomal subunit.

Functionally, this protein binds specifically to 23S rRNA; its binding is stimulated by other ribosomal proteins, e.g. L4, L17, and L20. It is important during the early stages of 50S assembly. It makes multiple contacts with different domains of the 23S rRNA in the assembled 50S subunit and ribosome. Its function is as follows. The globular domain of the protein is located near the polypeptide exit tunnel on the outside of the subunit, while an extended beta-hairpin is found that lines the wall of the exit tunnel in the center of the 70S ribosome. The polypeptide is Large ribosomal subunit protein uL22 (Streptococcus mutans serotype c (strain ATCC 700610 / UA159)).